We begin with the raw amino-acid sequence, 233 residues long: Large ribosomal subunit protein uL1 (233 aa).

Belongs to the universal ribosomal protein uL1 family. Part of the 50S ribosomal subunit.

Binds directly to 23S rRNA. The L1 stalk is quite mobile in the ribosome, and is involved in E site tRNA release. Functionally, protein L1 is also a translational repressor protein, it controls the translation of the L11 operon by binding to its mRNA. This chain is Large ribosomal subunit protein uL1, found in Campylobacter concisus (strain 13826).